We begin with the raw amino-acid sequence, 128 residues long: Anti-sigma-F factor antagonist RsfA (128 aa).

Positions leucine 17–threonine 128 constitute an STAS domain. A disulfide bridge connects residues cysteine 73 and cysteine 109.

It belongs to the anti-sigma-factor antagonist family. Monomer. Interacts with anti-sigma-F factor RsbW (UsfX).

In terms of biological role, positive, redox-sensitive regulator of sigma-F (SigF) activity. When reduced binds to anti-sigma-F factor RsbW (UsfX) preventing its binding to SigF, thus activating transcription. In Mycobacterium tuberculosis (strain CDC 1551 / Oshkosh), this protein is Anti-sigma-F factor antagonist RsfA (rsfA).